The primary structure comprises 644 residues: Exoribonuclease 2 (644 aa).

An RNB domain is found at Arg189–Lys516. In terms of domain architecture, S1 motif spans Asn561–Ala643.

Belongs to the RNR ribonuclease family. RNase II subfamily.

Its subcellular location is the cytoplasm. It carries out the reaction Exonucleolytic cleavage in the 3'- to 5'-direction to yield nucleoside 5'-phosphates.. Functionally, involved in mRNA degradation. Hydrolyzes single-stranded polyribonucleotides processively in the 3' to 5' direction. The protein is Exoribonuclease 2 of Salmonella agona (strain SL483).